Reading from the N-terminus, the 308-residue chain is NAD-dependent protein deacylase SIR4 (308 aa).

The transit peptide at 1–16 (MAATKLHPALRNAIRA) directs the protein to the mitochondrion. Residues 28 to 308 (TFDVQEGIKL…EVLPAALRQL (281 aa)) enclose the Deacetylase sirtuin-type domain. Residues 53–73 (GAGI…RPPH) and 129–132 (QNVD) each bind NAD(+). Catalysis depends on His-147, which acts as the Proton acceptor. Residues Cys-155, Cys-158, Cys-211, and Cys-214 each contribute to the Zn(2+) site. Residues 251 to 253 (GTS), 277 to 279 (NSG), and Ile-297 contribute to the NAD(+) site.

It belongs to the sirtuin family. Class II subfamily. Requires Zn(2+) as cofactor.

Its subcellular location is the mitochondrion matrix. It catalyses the reaction N(6)-acetyl-L-lysyl-[protein] + NAD(+) + H2O = 2''-O-acetyl-ADP-D-ribose + nicotinamide + L-lysyl-[protein]. Its function is as follows. NAD-dependent protein deacylase. Catalyzes the NAD-dependent hydrolysis of acyl groups from lysine residues. In Monosiga brevicollis (Choanoflagellate), this protein is NAD-dependent protein deacylase SIR4.